The chain runs to 146 residues: Hemoglobin subunit beta (146 aa).

Residues 2-146 (PFSAHEEKLI…VAAALSAEYH (145 aa)) form the Globin domain. His-63 and His-92 together coordinate heme b.

The protein belongs to the globin family. Heterotetramer of two alpha chains and two beta chains. In terms of tissue distribution, red blood cells.

Its function is as follows. Involved in oxygen transport from the lung to the various peripheral tissues. The protein is Hemoglobin subunit beta (HBB) of Caiman crocodilus (Spectacled caiman).